The chain runs to 175 residues: Ribosome maturation factor RimM (175 aa).

The PRC barrel domain maps to 103–175 (EGEYYWSDLI…LLTVDWDPDF (73 aa)).

This sequence belongs to the RimM family. Binds ribosomal protein uS19.

The protein resides in the cytoplasm. Its function is as follows. An accessory protein needed during the final step in the assembly of 30S ribosomal subunit, possibly for assembly of the head region. Essential for efficient processing of 16S rRNA. May be needed both before and after RbfA during the maturation of 16S rRNA. It has affinity for free ribosomal 30S subunits but not for 70S ribosomes. This Nitrosococcus oceani (strain ATCC 19707 / BCRC 17464 / JCM 30415 / NCIMB 11848 / C-107) protein is Ribosome maturation factor RimM.